The sequence spans 311 residues: Ornithine carbamoyltransferase (311 aa).

Carbamoyl phosphate contacts are provided by residues 59-62 (STRT), Gln86, Arg110, and 137-140 (HPCQ). L-ornithine is bound by residues Asn168, Asp228, and 232–233 (SM). Residues 267 to 268 (CL) and Arg295 contribute to the carbamoyl phosphate site.

The protein belongs to the aspartate/ornithine carbamoyltransferase superfamily. OTCase family.

It is found in the cytoplasm. The catalysed reaction is carbamoyl phosphate + L-ornithine = L-citrulline + phosphate + H(+). It functions in the pathway amino-acid biosynthesis; L-arginine biosynthesis; L-arginine from L-ornithine and carbamoyl phosphate: step 1/3. In terms of biological role, reversibly catalyzes the transfer of the carbamoyl group from carbamoyl phosphate (CP) to the N(epsilon) atom of ornithine (ORN) to produce L-citrulline. This Caulobacter vibrioides (strain ATCC 19089 / CIP 103742 / CB 15) (Caulobacter crescentus) protein is Ornithine carbamoyltransferase.